The chain runs to 275 residues: Intercellular adhesion molecule 2 (275 aa).

The first 24 residues, 1 to 24 (MSSFGYRTLTVALFALICCPGSDE), serve as a signal peptide directing secretion. Over 25 to 223 (KVFEVHVRPK…EIYEPVSDSQ (199 aa)) the chain is Extracellular. Residues 41–98 (KASLEVNCSTTCNQPEVGGLETSLDKILLDEQAQWKHYLVSNISHDTVLQCHFTCSGK) enclose the Ig-like C2-type 1 domain. N-linked (GlcNAc...) asparagine glycosylation is found at asparagine 47, asparagine 82, asparagine 105, asparagine 153, asparagine 158, asparagine 176, and asparagine 187. 2 cysteine pairs are disulfide-bonded: cysteine 48/cysteine 91 and cysteine 52/cysteine 95. Residues 127–197 (GKSFTIECRV…FSCLAVLDLI (71 aa)) form the Ig-like C2-type 2 domain. A disulfide bridge connects residues cysteine 134 and cysteine 190. The helical transmembrane segment at 224-248 (MVIIVTVVSVLLSLFVTSVLLCFIF) threads the bilayer. Residues 249 to 275 (GQHLRQQRMGTYGVRAAWRRLPQAFRP) lie on the Cytoplasmic side of the membrane. Residues 251 to 275 (HLRQQRMGTYGVRAAWRRLPQAFRP) form a required for interaction with EZR, MSN and RDX and co-localization to microvilli region.

This sequence belongs to the immunoglobulin superfamily. ICAM family. In terms of assembly, interacts with RDX, EZR and MSN.

It localises to the membrane. The protein localises to the cell projection. Its subcellular location is the microvillus. Functionally, ICAM proteins are ligands for the leukocyte adhesion protein LFA-1 (integrin alpha-L/beta-2). ICAM2 may play a role in lymphocyte recirculation by blocking LFA-1-dependent cell adhesion. It mediates adhesive interactions important for antigen-specific immune response, NK-cell mediated clearance, lymphocyte recirculation, and other cellular interactions important for immune response and surveillance. This chain is Intercellular adhesion molecule 2 (ICAM2), found in Gorilla gorilla gorilla (Western lowland gorilla).